Here is a 372-residue protein sequence, read N- to C-terminus: Peptide chain release factor 1 (372 aa).

Gln237 is modified (N5-methylglutamine).

This sequence belongs to the prokaryotic/mitochondrial release factor family. In terms of processing, methylated by PrmC. Methylation increases the termination efficiency of RF1.

It is found in the cytoplasm. Functionally, peptide chain release factor 1 directs the termination of translation in response to the peptide chain termination codons UAG and UAA. This Anaeromyxobacter sp. (strain Fw109-5) protein is Peptide chain release factor 1.